The primary structure comprises 438 residues: Enolase (438 aa).

Residues His-159 and Glu-168 each coordinate substrate. The active-site Proton donor is the Glu-211. Mg(2+)-binding residues include Asp-246, Glu-297, and Asp-322. Glu-297 and Asp-322 together coordinate substrate. Catalysis depends on Lys-347, which acts as the Proton acceptor. Substrate contacts are provided by residues Ser-374 to Ser-377 and Lys-398.

This sequence belongs to the enolase family. As to quaternary structure, homodimer. Mg(2+) serves as cofactor.

The protein localises to the cytoplasm. It carries out the reaction (2R)-2-phosphoglycerate = phosphoenolpyruvate + H2O. The protein operates within carbohydrate degradation; glycolysis; pyruvate from D-glyceraldehyde 3-phosphate: step 4/5. The chain is Enolase (enoA) from Aspergillus fumigatus (strain ATCC MYA-4609 / CBS 101355 / FGSC A1100 / Af293) (Neosartorya fumigata).